We begin with the raw amino-acid sequence, 402 residues long: Ketol-acid reductoisomerase, mitochondrial (402 aa).

The transit peptide at 1–26 (MAARNCTKALRPLARQLATPAVQRRT) directs the protein to the mitochondrion. A KARI N-terminal Rossmann domain is found at 63-252 (KEEVHERADW…AVGSGYLYET (190 aa)). NADP(+) is bound by residues 90-99 (GYGSQGHGQG), 114-119 (RKNGKS), and 152-156 (SDAAQ). Histidine 177 is an active-site residue. The KARI C-terminal knotted domain occupies 253–400 (TFEKEVYSDL…KAVRSLRPEN (148 aa)). Mg(2+)-binding residues include aspartate 261, glutamate 265, glutamate 297, and glutamate 301. Serine 323 contributes to the substrate binding site.

It belongs to the ketol-acid reductoisomerase family. Mg(2+) serves as cofactor.

It is found in the mitochondrion. The enzyme catalyses (2R)-2,3-dihydroxy-3-methylbutanoate + NADP(+) = (2S)-2-acetolactate + NADPH + H(+). The catalysed reaction is (2R,3R)-2,3-dihydroxy-3-methylpentanoate + NADP(+) = (S)-2-ethyl-2-hydroxy-3-oxobutanoate + NADPH + H(+). It participates in amino-acid biosynthesis; L-isoleucine biosynthesis; L-isoleucine from 2-oxobutanoate: step 2/4. The protein operates within amino-acid biosynthesis; L-valine biosynthesis; L-valine from pyruvate: step 2/4. The sequence is that of Ketol-acid reductoisomerase, mitochondrial (ilv-2) from Neurospora crassa (strain ATCC 24698 / 74-OR23-1A / CBS 708.71 / DSM 1257 / FGSC 987).